The following is a 447-amino-acid chain: Tubulin beta-4 chain (447 aa).

GTP-binding residues include glutamine 11, glutamate 69, serine 138, glycine 142, threonine 143, glycine 144, asparagine 204, and asparagine 226. Position 69 (glutamate 69) interacts with Mg(2+). The segment at 423–447 is disordered; sequence QQYQDATADEEGEYEDEEQQEADDM. Residues 429–447 are compositionally biased toward acidic residues; sequence TADEEGEYEDEEQQEADDM.

This sequence belongs to the tubulin family. In terms of assembly, dimer of alpha and beta chains. A typical microtubule is a hollow water-filled tube with an outer diameter of 25 nm and an inner diameter of 15 nM. Alpha-beta heterodimers associate head-to-tail to form protofilaments running lengthwise along the microtubule wall with the beta-tubulin subunit facing the microtubule plus end conferring a structural polarity. Microtubules usually have 13 protofilaments but different protofilament numbers can be found in some organisms and specialized cells. It depends on Mg(2+) as a cofactor. As to expression, expressed in roots and leaf sheaths.

It localises to the cytoplasm. It is found in the cytoskeleton. Functionally, tubulin is the major constituent of microtubules, a cylinder consisting of laterally associated linear protofilaments composed of alpha- and beta-tubulin heterodimers. Microtubules grow by the addition of GTP-tubulin dimers to the microtubule end, where a stabilizing cap forms. Below the cap, tubulin dimers are in GDP-bound state, owing to GTPase activity of alpha-tubulin. This Oryza sativa subsp. japonica (Rice) protein is Tubulin beta-4 chain (TUBB4).